An 841-amino-acid chain; its full sequence is Protein translocase subunit SecA (841 aa).

ATP contacts are provided by residues Gln-87, 105 to 109 (GEGKT), and Asp-494. The Zn(2+) site is built by Cys-825, Cys-827, Cys-836, and Cys-837.

The protein belongs to the SecA family. Monomer and homodimer. Part of the essential Sec protein translocation apparatus which comprises SecA, SecYEG and auxiliary proteins SecDF-YajC and YidC. It depends on Zn(2+) as a cofactor.

It localises to the cell inner membrane. It is found in the cytoplasm. The enzyme catalyses ATP + H2O + cellular proteinSide 1 = ADP + phosphate + cellular proteinSide 2.. Its function is as follows. Part of the Sec protein translocase complex. Interacts with the SecYEG preprotein conducting channel. Has a central role in coupling the hydrolysis of ATP to the transfer of proteins into and across the cell membrane, serving as an ATP-driven molecular motor driving the stepwise translocation of polypeptide chains across the membrane. The polypeptide is Protein translocase subunit SecA (Syntrophus aciditrophicus (strain SB)).